The chain runs to 304 residues: Non-specific ribonucleoside hydrolase RihC (304 aa).

Histidine 233 is a catalytic residue.

This sequence belongs to the IUNH family. RihC subfamily.

In terms of biological role, hydrolyzes both purine and pyrimidine ribonucleosides with a broad-substrate specificity. The protein is Non-specific ribonucleoside hydrolase RihC of Escherichia coli O45:K1 (strain S88 / ExPEC).